The sequence spans 1320 residues: Sister chromatid cohesion protein PDS5 homolog A (1320 aa).

HEAT repeat units lie at residues 156 to 195, 272 to 310, 388 to 426, 709 to 747, and 990 to 1028; these read NEIFIQLFKTLFSVINNSHNQKVQMHMLDLMSSIIMEGDG, PLLLVSVMPQLEFKLKSNDGEERLAVVKLLAKLFGAKDS, NLVNDQLLGFVRERMLDKRWRVRKEAMMGLAQLFKKYCL, PQIRSTLIPILHQKAKRGTPHQAKQAVHCIHAIFHNKEV, and SLLPEYVVPYMIHLLAHDPDLTKPQDLEQLRDVKECLWF. The span at 1158–1179 shows a compositional bias: polar residues; it reads TFTSETGSNASTNSQPSSPATN. The interval 1158 to 1320 is disordered; that stretch reads TFTSETGSNA…APQRQIDLQR (163 aa). The span at 1180 to 1194 shows a compositional bias: basic and acidic residues; sequence KSRDVSSEVGARENE. Polar residues predominate over residues 1225 to 1241; that stretch reads GTENSVSSNPSAGSQPP. Residues 1255 to 1267 are compositionally biased toward low complexity; it reads AGAATQEKEAGAT. Positions 1283–1293 are enriched in polar residues; that stretch reads QDPSSTASTDA. The span at 1294–1309 shows a compositional bias: basic and acidic residues; that stretch reads LSDKTPKQQKEAEPKR.

This sequence belongs to the PDS5 family. In terms of assembly, interacts with the cohesin complex. Binds chromatin in a cohesin-dependent manner.

Its subcellular location is the nucleus. Its function is as follows. May regulate sister chromatid cohesion during mitosis and couple it to DNA replication. The protein is Sister chromatid cohesion protein PDS5 homolog A of Danio rerio (Zebrafish).